Consider the following 133-residue polypeptide: Type VI secretion amidase effector 2 protein (133 aa).

Catalysis depends on residues Cys23 and His73.

Belongs to the cell wall amidase Dae2/Tae2-like family.

It is found in the host periplasm. Its subcellular location is the secreted. It functions in the pathway cell wall degradation; peptidoglycan degradation. Functionally, toxic component of a contact-dependent interbacterial competition system (also called effector-immunity systems). Secreted by the SPI-6 type VI secretion system, probably into the periplasm of bacterial target cells. A cell wall amidase with specificity toward the D-meso-DAP-D-alanine bond (D-meso-diaminopimelic-D-alanine) found in peptidoglycan of Gram-negative bacteria. Toxicity is counteracted by a cognate immunity protein Tai2 (t2585), but not immunity proteins associated with a similar endopeptidase in other bacteria. In vitro degrades peptidoglycans from Gram-negative but not Gram-positive bacteria. The protein is Type VI secretion amidase effector 2 protein of Salmonella typhi.